The following is a 233-amino-acid chain: MSIHIGAKKGEIAETILLPGDPLRAKFIAENFLENIECYNEVRGMYGFTGSYKGKRISVQGTGMGMPSISIYVNELISDYGVKNLIRVGTCGAMQEEIQLRDVILAMSASTDSNMNKLRFGGMDYAPTASFRLLKKAYDVAQEKGILTRVGNVLTVDTFYNEDVNSWKKWAEFGTLAVEMETAALYTLAAKFGVDALTLLTVSDSLITGGQTTSEERQNTFMGMVKIALELAE.

Histidine 4 provides a ligand contact to a purine D-ribonucleoside. Residues glycine 20, arginine 24, arginine 43, and 87 to 90 (RVGT) each bind phosphate. A purine D-ribonucleoside contacts are provided by residues glutamate 162, 179 to 181 (EME), and 203 to 204 (SD). Aspartate 204 serves as the catalytic Proton donor.

Belongs to the PNP/UDP phosphorylase family. Homohexamer; trimer of homodimers.

The enzyme catalyses a purine D-ribonucleoside + phosphate = a purine nucleobase + alpha-D-ribose 1-phosphate. It catalyses the reaction a purine 2'-deoxy-D-ribonucleoside + phosphate = a purine nucleobase + 2-deoxy-alpha-D-ribose 1-phosphate. Its function is as follows. Catalyzes the reversible phosphorolytic breakdown of the N-glycosidic bond in the beta-(deoxy)ribonucleoside molecules, with the formation of the corresponding free purine bases and pentose-1-phosphate. The chain is Purine nucleoside phosphorylase DeoD-type from Alkaliphilus metalliredigens (strain QYMF).